The following is a 665-amino-acid chain: Fructose-1,6-bisphosphatase class 3 (665 aa).

The protein belongs to the FBPase class 3 family. It depends on Mn(2+) as a cofactor.

The catalysed reaction is beta-D-fructose 1,6-bisphosphate + H2O = beta-D-fructose 6-phosphate + phosphate. The protein operates within carbohydrate biosynthesis; gluconeogenesis. The sequence is that of Fructose-1,6-bisphosphatase class 3 from Clostridium acetobutylicum (strain ATCC 824 / DSM 792 / JCM 1419 / IAM 19013 / LMG 5710 / NBRC 13948 / NRRL B-527 / VKM B-1787 / 2291 / W).